Reading from the N-terminus, the 523-residue chain is VFPKVPFDVPKATVESYTRFIRVLRDELAGGVSPQGIRRLRNPAEIQPSQGFILIQLTGYVGSVTLIMDVRNAYLLGYLSHNVLYHFNDVSASSIASVFPDAQRRQLPFGGGYPSMRNYAPERDQIDHGIVELAYAVDRLYYSQNNNQIALGLVICAGMVAEASRFRYIEGLVRQSIVGPGDYRTFRPDALMYSIVTQWQTLSERIQGSFNGAFQPVQLGYASDPFYWDNVAQAITRLSLMLFVCSQPPRQSDSPLVIRSFVDRNDPVCPSGETTAFIVGRDGRCVDVKVEEFFDGNKVQMWPCKSSQNANQLWTLKRDGTIRCQGKCLTVRSPQLYAMIWDCTTFYAPATKWEVWDNGTIINPASGRVLTAPTGEAGVTLNLQFNEYAASQAWRVTNVTVPTVTTIVGYDDLCLETNGNGVWLANCVKGKAQQRWTLYADGTIRSQSTLSKCLACSGSCVKLAKIVNTDCAGSANSRWYFDNYGGIVNLRTGMVMDVKESNPSLNEIIAHPWHGNSNQQWFL.

Catalysis depends on residues Tyr74, Tyr113, Glu162, and Arg165. 111-113 serves as a coordination point for AMP; that stretch reads GGY. Cystine bridges form between Cys245-Cys269 and Cys285-Cys304. Positions 251–265 are cleaved as a propeptide — linker peptide; sequence QSDSPLVIRSFVDRN. The Ricin B-type lectin 1 domain maps to 270-397; the sequence is PSGETTAFIV…YAASQAWRVT (128 aa). A carbohydrate contacts are provided by residues 287-291, Gln300, Lys305, and Asn311; that span reads DVKVE. Cys328 and Cys343 form a disulfide bridge. Residues Asn358 and Asn398 each coordinate a carbohydrate. Residues Asn358 and Asn398 are each glycosylated (N-linked (GlcNAc...) asparagine). In terms of domain architecture, Ricin B-type lectin 2 spans 400–523; that stretch reads TVPTVTTIVG…HGNSNQQWFL (124 aa). 2 disulfides stabilise this stretch: Cys414–Cys427 and Cys453–Cys471.

This sequence in the N-terminal section; belongs to the ribosome-inactivating protein family. Type 2 RIP subfamily. As to quaternary structure, disulfide-linked dimer of A and B chains. N-glycosylated. Contains mannose and galactose. In terms of tissue distribution, expressed in roots (at protein level). Expressed in seeds (at protein level).

It carries out the reaction Endohydrolysis of the N-glycosidic bond at one specific adenosine on the 28S rRNA.. Hemagglutinating activity is inhibited by galactose and structurally related sugars. Has N-glycosidase activity and is responsible for inhibiting protein synthesis through the catalytic inactivation of 60S ribosomal subunits by removing a specific adenine of 28S rRNA. Inhibits GTP-dependent binding of EF2 (elongation factor 2) to ribosomes. In terms of biological role, binds to cell receptors and probably facilitates the entry into the cell of the A chain. Also acts as a galactose-specific lectin responsible for cell agglutination. The chain is Volkensin from Adenia volkensii (Kilyambiti plant).